We begin with the raw amino-acid sequence, 226 residues long: MRHFVVFLYMFLALSIPTAFAKKHIVTKKGNHQDITNDNEGENAEKKSAAVAGAVIAGGELALKILTKILDEIGKIDRKIAIGVDNESGLKWTALNTYYKSGASDVTLPYEVENSKALLYTARKSKGPVARGAVGVLAYKMSSGNTLAVMFSVPFDYNLYTNWWNVKIYDGEKKADEKMYNELYNNNNPIKPSIWEKRDLGQDGLKLRGFMTSNGDAKLVIHIEKS.

The signal sequence occupies residues Met1–Ala21. Residues Lys22 to Glu45 constitute a propeptide that is removed on maturation. The tract at residues Ala50 to Gly59 is plays an important role in the hemolytic activity. The N-terminal region stretch occupies residues Gly58–Asp77. Positions 101, 134, 152, 154, 180, and 184 each coordinate phosphocholine. Positions Ser152–Lys167 are trp-rich region, which is important for the binding to lipid membrane. Positions Lys191–Ser193 match the Cell attachment site, crucial for protein stability motif.

This sequence belongs to the actinoporin family. Sea anemone subfamily. Octamer or nonamer in membranes. Monomer in the soluble state.

It is found in the secreted. The protein localises to the nematocyst. Its subcellular location is the target cell membrane. Its function is as follows. Pore-forming protein that forms cations-selective hydrophilic pores of around 1 nm and causes cytolysis. Pore formation is a multi-step process that involves specific recognition of membrane sphingomyelin (but neither cholesterol nor phosphatidylcholine) using aromatic rich region and adjacent phosphocholine (POC) binding site, firm binding to the membrane (mainly driven by hydrophobic interactions) accompanied by the transfer of the N-terminal region to the lipid-water interface and finally pore formation after oligomerization of monomers. This is DELTA-thalatoxin-Avl1b from Actineria villosa (Okinawan sea anemone).